The following is a 122-amino-acid chain: Large ribosomal subunit protein uL14 (122 aa).

This sequence belongs to the universal ribosomal protein uL14 family. Part of the 50S ribosomal subunit. Forms a cluster with proteins L3 and L19. In the 70S ribosome, L14 and L19 interact and together make contacts with the 16S rRNA in bridges B5 and B8.

Functionally, binds to 23S rRNA. Forms part of two intersubunit bridges in the 70S ribosome. This Methylibium petroleiphilum (strain ATCC BAA-1232 / LMG 22953 / PM1) protein is Large ribosomal subunit protein uL14.